The following is a 158-amino-acid chain: Transcription elongation factor GreA (158 aa).

It belongs to the GreA/GreB family.

Necessary for efficient RNA polymerase transcription elongation past template-encoded arresting sites. The arresting sites in DNA have the property of trapping a certain fraction of elongating RNA polymerases that pass through, resulting in locked ternary complexes. Cleavage of the nascent transcript by cleavage factors such as GreA or GreB allows the resumption of elongation from the new 3'terminus. GreA releases sequences of 2 to 3 nucleotides. In Baumannia cicadellinicola subsp. Homalodisca coagulata, this protein is Transcription elongation factor GreA.